Here is a 527-residue protein sequence, read N- to C-terminus: Protein PLASTID TRANSCRIPTIONALLY ACTIVE 12, chloroplastic (527 aa).

The transit peptide at methionine 1–arginine 30 directs the protein to the chloroplast. A PHYA-interacting region 1 (PIR1) region spans residues methionine 1–proline 115. Residues serine 89–tyrosine 188 form a disordered region. Over residues threonine 163 to serine 181 the composition is skewed to acidic residues. 2 consecutive short sequence motifs (nuclear localization signal) follow at residues aspartate 204–histidine 211 and tryptophan 235–glutamine 242. The PHYA-interacting region 2 (PIR2) stretch occupies residues aspartate 252–glutamate 352. The span at glycine 458 to lysine 471 shows a compositional bias: acidic residues. The interval glycine 458–proline 527 is disordered. A compositionally biased stretch (basic and acidic residues) spans glutamate 485–leucine 504. Residues glutamate 506–proline 527 are compositionally biased toward acidic residues. The Required and sufficient for transcriptional transactivation activity and to trigger PIF proteins degradation motif lies at glutamate 512 to aspartate 520.

Component of the transcriptionally active chromosome (TAC) complexes. Interacts with PTAC14 and PTAC7. Binds directly to PTAC6/PAP8 in the nucleus. Interacts with MED14. Binds to SL1/MTERF3. Binds to photoactivated phytochromes (e.g. PHYA and PHYB) via their photosensory domains; these interactions stimulate its light-mediated accumulation. Associates, via its N-terminal region, with phytochrome-interacting factors (PIFs) including PIF1, PIF3, PIF4, PIF5, PIF6, BHLH72/PIF7, UNE10/PIF8 and PIL1. Binds to RAD4. Associates with MRL7/RCB. Mostly expressed in cotyledons, leaves, stems and flowers, but barely in roots.

It localises to the plastid. The protein localises to the chloroplast. The protein resides in the nucleus. Functionally, involved in plastid gene expression. Acidic transcriptional coactivator necessary for the transactivation of many PIFs target genes (class B genes), particularly during the regulation of hypocotyl growth. Plays dual opposite roles in regulating hypocotyl growth, preventing it in red and far-red conditions, but promoting it otherwise. Required in the nucleus for the initiation of photomorphogenesis mediated by phytochromes (PHYs) (e.g. PHYA and PHYB) by mediating PHYs localization to photobodies, especially in response to red and far-red light, and implicating phytochrome nuclear bodies as sites of proteolysis for PHYs and PIFs proteins (e.g. PIF1 and PIF3). Acts downstream of PHYs and upstream of DET1. Involved in UV tolerance in both roots and hypocotyls, specifically in dark conditions. Element of a PIF4/HMR/MED14-dependent thermoresponsive process; acts as a PIF4 transcriptional coactivator to trigger the thermoresponsive growth-relevant genes (e.g. mainly involved in biosynthesis and signaling of the phytohormone auxin) and promote warm-temperature-dependent (e.g. 27 degrees Celsius) PIF4 and MED14 stabilization and accumulation, being more prominently involved in long days (LD) and continuous red light (Rc) than in short days (SD), thus modulating warm temperature elicitation of MED14-dependent thermomorphogenesis (e.g. hypocotyl elongation). The sequence is that of Protein PLASTID TRANSCRIPTIONALLY ACTIVE 12, chloroplastic from Arabidopsis thaliana (Mouse-ear cress).